We begin with the raw amino-acid sequence, 509 residues long: ATP synthase subunit alpha (509 aa).

169–176 provides a ligand contact to ATP; sequence GDRQTGKT.

This sequence belongs to the ATPase alpha/beta chains family. F-type ATPases have 2 components, CF(1) - the catalytic core - and CF(0) - the membrane proton channel. CF(1) has five subunits: alpha(3), beta(3), gamma(1), delta(1), epsilon(1). CF(0) has three main subunits: a(1), b(2) and c(9-12). The alpha and beta chains form an alternating ring which encloses part of the gamma chain. CF(1) is attached to CF(0) by a central stalk formed by the gamma and epsilon chains, while a peripheral stalk is formed by the delta and b chains.

The protein localises to the cell inner membrane. The catalysed reaction is ATP + H2O + 4 H(+)(in) = ADP + phosphate + 5 H(+)(out). In terms of biological role, produces ATP from ADP in the presence of a proton gradient across the membrane. The alpha chain is a regulatory subunit. The polypeptide is ATP synthase subunit alpha (Zymomonas mobilis subsp. mobilis (strain ATCC 31821 / ZM4 / CP4)).